Consider the following 258-residue polypeptide: Diacetyl reductase [(S)-acetoin forming] (258 aa).

NAD(+) is bound at residue leucine 8 to alanine 32. Serine 141 provides a ligand contact to substrate. The Proton acceptor role is filled by tyrosine 154. The active site involves lysine 158.

It belongs to the short-chain dehydrogenases/reductases (SDR) family.

The catalysed reaction is (S)-acetoin + NAD(+) = diacetyl + NADH + H(+). Its function is as follows. Catalyzes the irreversible reduction of 2,3-butanediol to (S)-acetoin in the presence of NADH. The sequence is that of Diacetyl reductase [(S)-acetoin forming] (butA) from Staphylococcus aureus (strain Mu50 / ATCC 700699).